We begin with the raw amino-acid sequence, 772 residues long: Carnitine O-palmitoyltransferase 1, muscle isoform (772 aa).

Residues Met1–Lys47 are Cytoplasmic-facing. The helical transmembrane segment at Asn48–Asn73 threads the bilayer. At Tyr74 to Gln102 the chain is on the mitochondrial intermembrane side. A helical membrane pass occupies residues Thr103–Phe122. The Cytoplasmic segment spans residues Leu123–Ser772. His473 serves as the catalytic Proton acceptor. A CoA-binding site is contributed by Gly555–Asp567. 2 residues coordinate (R)-carnitine: Tyr589 and Thr602.

It belongs to the carnitine/choline acetyltransferase family. In terms of tissue distribution, high expression in heart, skeletal muscle and brown adipose tissue. Also expressed in white adipose tissue, but not in liver.

The protein resides in the mitochondrion outer membrane. It carries out the reaction (R)-carnitine + hexadecanoyl-CoA = O-hexadecanoyl-(R)-carnitine + CoA. The protein operates within lipid metabolism; fatty acid beta-oxidation. Functionally, catalyzes the transfer of the acyl group of long-chain fatty acid-CoA conjugates onto carnitine, an essential step for the mitochondrial uptake of long-chain fatty acids and their subsequent beta-oxidation in the mitochondrion. This Rattus norvegicus (Rat) protein is Carnitine O-palmitoyltransferase 1, muscle isoform (Cpt1b).